The chain runs to 1148 residues: Maintenance of telomere capping protein 5 (1148 aa).

WD repeat units lie at residues 63 to 106 (HHIT…SNAI), 112 to 152 (GHSR…RPFY), 156 to 195 (SWRS…TPLC), 199 to 239 (GHVS…TESK), and 299 to 348 (GHSD…YGKV). The 112-residue stretch at 432–543 (EEVSAIGHKF…RFVLGEKVSL (112 aa)) folds into the RWD domain. Ser-759 carries the post-translational modification Phosphoserine. Residues 963–990 (THNTLNGSSKFTEPAQKQGSRAISSSPF) form a disordered region. Polar residues predominate over residues 964 to 990 (HNTLNGSSKFTEPAQKQGSRAISSSPF).

It belongs to the WD repeat WDR59 family. Component of the SEA complex composed of at least IML1/SEA1, RTC1/SEA2, MTC5/SEA3, NPR2, NPR3, SEA4, SEC13 and SEH1.

It localises to the vacuole membrane. Functionally, component of the SEA complex which coats the vacuolar membrane and is involved in intracellular trafficking, autophagy, response to nitrogen starvation, and amino acid biogenesis. May be involved in telomere capping. The chain is Maintenance of telomere capping protein 5 (MTC5) from Saccharomyces cerevisiae (strain ATCC 204508 / S288c) (Baker's yeast).